A 740-amino-acid polypeptide reads, in one-letter code: Rho GTPase-activating protein 92B (740 aa).

In terms of domain architecture, BAR spans 13 to 246; that stretch reads ENLSRSSKSD…IQDTIQGTEK (234 aa). Residues 49-74 form a disordered region; it reads LPALSGGGGSGSGSSEEQDKRTKKNS. The 198-residue stretch at 251 to 448 folds into the Rho-GAP domain; the sequence is TSLKEHLTST…LLISQWDYFF (198 aa). The tract at residues 467 to 740 is disordered; the sequence is GKSKSNSSNE…PPPTNWKSSD (274 aa). Phosphoserine is present on residues serine 469 and serine 473. Polar residues predominate over residues 506–520; the sequence is TTNGNGIIMTTSQTS. Residues 566–577 are compositionally biased toward pro residues; that stretch reads PLPPPPVTPAKP. Serine 593 carries the post-translational modification Phosphoserine. Threonine 595 carries the post-translational modification Phosphothreonine. Residues 643 to 655 are compositionally biased toward polar residues; it reads TTPTQATIDNGNG. Basic and acidic residues predominate over residues 659–672; the sequence is FKTEHFLDKLRQEN. The span at 673–686 shows a compositional bias: polar residues; sequence GETNGTREVSSTTK. The segment covering 694-713 has biased composition (low complexity); that stretch reads PPATAADQNQQQAQPQVTTP. Phosphoserine is present on serine 715. Threonine 721 bears the Phosphothreonine mark. Residues 725–734 show a composition bias toward pro residues; sequence PTVPAPPPPT. A phosphoserine mark is found at serine 738 and serine 739.

GTPase activator for the Rho-type GTPases by converting them to an inactive GDP-bound state. The polypeptide is Rho GTPase-activating protein 92B (RhoGAP92B) (Drosophila melanogaster (Fruit fly)).